The following is a 124-amino-acid chain: Protein MGF 110-4L (124 aa).

A signal peptide spans 1–18 (MLVIFLGILGLLANQVLG). A glycan (N-linked (GlcNAc...) asparagine; by host) is linked at asparagine 64. Positions 121–124 (KEDL) match the Prevents secretion from ER motif.

The protein belongs to the asfivirus MGF 110 family.

The protein localises to the virion. The protein resides in the host endoplasmic reticulum-Golgi intermediate compartment. Its function is as follows. Causes the redistribution of lumenal ER protein to an enlarged ERGIC compartment. The polypeptide is Protein MGF 110-4L (Ornithodoros (relapsing fever ticks)).